Consider the following 120-residue polypeptide: Ribosome-binding factor A (120 aa).

Belongs to the RbfA family. In terms of assembly, monomer. Binds 30S ribosomal subunits, but not 50S ribosomal subunits or 70S ribosomes.

The protein resides in the cytoplasm. One of several proteins that assist in the late maturation steps of the functional core of the 30S ribosomal subunit. Associates with free 30S ribosomal subunits (but not with 30S subunits that are part of 70S ribosomes or polysomes). Required for efficient processing of 16S rRNA. May interact with the 5'-terminal helix region of 16S rRNA. The polypeptide is Ribosome-binding factor A (Chlorobaculum tepidum (strain ATCC 49652 / DSM 12025 / NBRC 103806 / TLS) (Chlorobium tepidum)).